We begin with the raw amino-acid sequence, 406 residues long: Corticosteroid-binding globulin (406 aa).

The N-terminal stretch at 1–22 (MLLTLYACLLWLSTSGLWTSQA) is a signal peptide. Asn95, Asn119, and Asn223 each carry an N-linked (GlcNAc...) asparagine glycan. Gln253 lines the cortisol pocket. N-linked (GlcNAc...) asparagine glycosylation occurs at Asn259. The cortisol site is built by Gln285 and Trp394.

Belongs to the serpin family.

It is found in the secreted. In terms of biological role, major transport protein for glucocorticoids and progestins in the blood of almost all vertebrate species. The protein is Corticosteroid-binding globulin (Serpina6) of Sus scrofa (Pig).